Reading from the N-terminus, the 142-residue chain is Midkine (142 aa).

The N-terminal stretch at 1–21 is a signal peptide; sequence MQPRGLLLLLALLLLAAAAEA. Intrachain disulfides connect Cys-36–Cys-60, Cys-44–Cys-69, Cys-51–Cys-73, Cys-83–Cys-115, and Cys-93–Cys-125.

It belongs to the pleiotrophin family.

It is found in the cell surface. The protein localises to the secreted. It localises to the extracellular space. The protein resides in the extracellular matrix. Its subcellular location is the basement membrane. Has mitogenic activity, and neurite extension activity for PC12 cells. This Gallus gallus (Chicken) protein is Midkine (RIHB).